We begin with the raw amino-acid sequence, 199 residues long: Probable molybdenum cofactor guanylyltransferase (199 aa).

GTP-binding positions include 6-8 (LAG), Lys18, Asp65, and Asp97. Mg(2+) is bound at residue Asp97.

It belongs to the MobA family. The cofactor is Mg(2+).

The protein localises to the cytoplasm. The enzyme catalyses Mo-molybdopterin + GTP + H(+) = Mo-molybdopterin guanine dinucleotide + diphosphate. Functionally, transfers a GMP moiety from GTP to Mo-molybdopterin (Mo-MPT) cofactor (Moco or molybdenum cofactor) to form Mo-molybdopterin guanine dinucleotide (Mo-MGD) cofactor. This Staphylococcus aureus (strain COL) protein is Probable molybdenum cofactor guanylyltransferase.